Here is an 88-residue protein sequence, read N- to C-terminus: Enticin (88 aa).

An N-terminal signal peptide occupies residues 1 to 19; sequence MKTALPLLLLTCLVAAVQS. 3 disulfide bridges follow: C25/C33, C40/C52, and C59/C67. Residues 69–88 constitute a propeptide that is removed on maturation; sequence REQSQLNHDHLNNHTTTQQP.

In terms of assembly, binds to attractin and temptin.

The protein resides in the secreted. Its function is as follows. A component of the complex of water-borne protein pheromones that stimulates attraction and mating behavior. The sequence is that of Enticin from Aplysia californica (California sea hare).